We begin with the raw amino-acid sequence, 410 residues long: Multifunctional CCA protein (410 aa).

ATP-binding residues include Gly-8 and Arg-11. Positions 8 and 11 each coordinate CTP. The Mg(2+) site is built by Asp-21 and Asp-23. ATP-binding residues include Arg-91, Arg-137, and Arg-140. The CTP site is built by Arg-91, Arg-137, and Arg-140. Residues Ser-225–Phe-326 enclose the HD domain.

This sequence belongs to the tRNA nucleotidyltransferase/poly(A) polymerase family. Bacterial CCA-adding enzyme type 1 subfamily. As to quaternary structure, monomer. Can also form homodimers and oligomers. It depends on Mg(2+) as a cofactor. The cofactor is Ni(2+).

The catalysed reaction is a tRNA precursor + 2 CTP + ATP = a tRNA with a 3' CCA end + 3 diphosphate. It carries out the reaction a tRNA with a 3' CCA end + 2 CTP + ATP = a tRNA with a 3' CCACCA end + 3 diphosphate. Catalyzes the addition and repair of the essential 3'-terminal CCA sequence in tRNAs without using a nucleic acid template. Adds these three nucleotides in the order of C, C, and A to the tRNA nucleotide-73, using CTP and ATP as substrates and producing inorganic pyrophosphate. tRNA 3'-terminal CCA addition is required both for tRNA processing and repair. Also involved in tRNA surveillance by mediating tandem CCA addition to generate a CCACCA at the 3' terminus of unstable tRNAs. While stable tRNAs receive only 3'-terminal CCA, unstable tRNAs are marked with CCACCA and rapidly degraded. The chain is Multifunctional CCA protein from Neisseria gonorrhoeae (strain NCCP11945).